The sequence spans 124 residues: Small ribosomal subunit protein bS6 (124 aa).

Belongs to the bacterial ribosomal protein bS6 family.

In terms of biological role, binds together with bS18 to 16S ribosomal RNA. The chain is Small ribosomal subunit protein bS6 from Actinobacillus pleuropneumoniae serotype 7 (strain AP76).